The chain runs to 272 residues: HMP-PP phosphatase (272 aa).

Asp-8 (nucleophile) is an active-site residue. Mg(2+) contacts are provided by Asp-8, Asp-10, and Asp-212.

This sequence belongs to the HAD-like hydrolase superfamily. Cof family. Mg(2+) is required as a cofactor.

It catalyses the reaction 4-amino-2-methyl-5-(diphosphooxymethyl)pyrimidine + H2O = 4-amino-2-methyl-5-(phosphooxymethyl)pyrimidine + phosphate + H(+). In terms of biological role, catalyzes the hydrolysis of 4-amino-2-methyl-5-hydroxymethylpyrimidine pyrophosphate (HMP-PP) to 4-amino-2-methyl-5-hydroxymethylpyrimidine phosphate (HMP-P). The chain is HMP-PP phosphatase from Salmonella arizonae (strain ATCC BAA-731 / CDC346-86 / RSK2980).